The sequence spans 286 residues: ATP synthase gamma chain (286 aa).

This sequence belongs to the ATPase gamma chain family. As to quaternary structure, F-type ATPases have 2 components, CF(1) - the catalytic core - and CF(0) - the membrane proton channel. CF(1) has five subunits: alpha(3), beta(3), gamma(1), delta(1), epsilon(1). CF(0) has three main subunits: a, b and c.

The protein resides in the cell inner membrane. Its function is as follows. Produces ATP from ADP in the presence of a proton gradient across the membrane. The gamma chain is believed to be important in regulating ATPase activity and the flow of protons through the CF(0) complex. The polypeptide is ATP synthase gamma chain (Shewanella piezotolerans (strain WP3 / JCM 13877)).